We begin with the raw amino-acid sequence, 220 residues long: 7-cyano-7-deazaguanine synthase (220 aa).

7–17 (LSGGMDSSITA) lines the ATP pocket. The Zn(2+) site is built by Cys-185, Cys-193, Cys-196, and Cys-199.

This sequence belongs to the QueC family. The cofactor is Zn(2+).

It catalyses the reaction 7-carboxy-7-deazaguanine + NH4(+) + ATP = 7-cyano-7-deazaguanine + ADP + phosphate + H2O + H(+). It functions in the pathway purine metabolism; 7-cyano-7-deazaguanine biosynthesis. In terms of biological role, catalyzes the ATP-dependent conversion of 7-carboxy-7-deazaguanine (CDG) to 7-cyano-7-deazaguanine (preQ(0)). The polypeptide is 7-cyano-7-deazaguanine synthase (Nitratiruptor sp. (strain SB155-2)).